A 206-amino-acid polypeptide reads, in one-letter code: Ras-related protein RABG3e (206 aa).

Position 15–22 (15–22 (GDSGVGKT)) interacts with GTP. The Effector region signature appears at 37 to 45 (YKATIGADF). GTP-binding positions include 63–67 (DTAGQ), 125–128 (NKID), and 158–159 (SA). Residues cysteine 204 and cysteine 206 are each lipidated (S-geranylgeranyl cysteine). Cysteine 206 is modified (cysteine methyl ester).

This sequence belongs to the small GTPase superfamily. Rab family.

It is found in the cell membrane. In terms of biological role, intracellular vesicle trafficking and protein transport. May play a role in adaptation to stress by recylcing macromolecules in specific cellular compartments. This Arabidopsis thaliana (Mouse-ear cress) protein is Ras-related protein RABG3e (RABG3E).